A 329-amino-acid chain; its full sequence is Sex comb on midleg-like protein 1 (329 aa).

Phosphoserine is present on residues S138 and S238. Positions 138–157 (SPTLPVSRRENNSPSNLPRP) are disordered. Residues 258–325 (WSVEAVVLFL…YYIDRLKQGK (68 aa)) enclose the SAM domain.

This sequence belongs to the SCM family.

Its subcellular location is the nucleus. Its function is as follows. Putative Polycomb group (PcG) protein. PcG proteins act by forming multiprotein complexes, which are required to maintain the transcriptionally repressive state of homeotic genes throughout development. May be involved in spermatogenesis during sexual maturation. The chain is Sex comb on midleg-like protein 1 (SCML1) from Gorilla gorilla gorilla (Western lowland gorilla).